The chain runs to 196 residues: DnaA initiator-associating protein DiaA (196 aa).

An SIS domain is found at 34-196; the sequence is MVQSLLNGNK…DNTLFPHQND (163 aa).

The protein belongs to the SIS family. DiaA subfamily. As to quaternary structure, homotetramer; dimer of dimers.

Required for the timely initiation of chromosomal replication via direct interactions with the DnaA initiator protein. This Pectobacterium carotovorum subsp. carotovorum (strain PC1) protein is DnaA initiator-associating protein DiaA.